The following is a 90-amino-acid chain: Probable Fe(2+)-trafficking protein (90 aa).

It belongs to the Fe(2+)-trafficking protein family.

Functionally, could be a mediator in iron transactions between iron acquisition and iron-requiring processes, such as synthesis and/or repair of Fe-S clusters in biosynthetic enzymes. This Aeromonas hydrophila subsp. hydrophila (strain ATCC 7966 / DSM 30187 / BCRC 13018 / CCUG 14551 / JCM 1027 / KCTC 2358 / NCIMB 9240 / NCTC 8049) protein is Probable Fe(2+)-trafficking protein.